The following is a 1048-amino-acid chain: PH and SEC7 domain-containing protein 3 (1048 aa).

The span at 36–45 (SEGKAPDTSD) shows a compositional bias: basic and acidic residues. Residues 36 to 57 (SEGKAPDTSDHGGSTLLPPNVT) form a disordered region. At Ser-76 the chain carries Phosphoserine. 4 disordered regions span residues 104 to 126 (LDSVTEGPKDVREAPSQSHLKEQ), 310 to 342 (GGDKRETQHPIDFETSLQRTASPDSKESSKVPR), 364 to 383 (SWKAPSERPGTSSGTFSPVR), and 395 to 434 (QENKQHLEKTPKPERDRERISEQEEHVKGEDEDILGPGYT). The segment covering 311–321 (GDKRETQHPID) has biased composition (basic and acidic residues). Over residues 397–423 (NKQHLEKTPKPERDRERISEQEEHVKG) the composition is skewed to basic and acidic residues. Positions 534 to 734 (TKGTPEIAFW…KALYNSIKNE (201 aa)) constitute an SEC7 domain. Residues 741-758 (DDEEKKKSPSESTEEKAN) show a composition bias toward basic and acidic residues. The interval 741–769 (DDEEKKKSPSESTEEKANGTHPKTISRIG) is disordered. Phosphoserine is present on Ser-770. One can recognise a PH domain in the interval 785–898 (AVYKSGFLAR…WINKINCVAA (114 aa)). Residues 922–952 (ATTTKLSQEEQLKSHESKLKQITTELAEHRS) are a coiled coil. The segment at 999–1048 (DESEAAGLKKSHSSPSLNPDTSPITAKVKRNVSERKDHRPETPSIKQKVT) is disordered. Residues Ser-1009, Ser-1011, Ser-1012, Ser-1014, and Ser-1020 each carry the phosphoserine modification. The segment covering 1011-1022 (SSPSLNPDTSPI) has biased composition (polar residues). Over residues 1029–1039 (NVSERKDHRPE) the composition is skewed to basic and acidic residues.

Isoform 2 is expressed in epididymis (at protein level).

The protein resides in the cell membrane. It is found in the cell projection. It localises to the ruffle membrane. Its subcellular location is the postsynaptic density. In terms of biological role, guanine nucleotide exchange factor for ARF6. The protein is PH and SEC7 domain-containing protein 3 (PSD3) of Homo sapiens (Human).